Reading from the N-terminus, the 309-residue chain is UDP-N-acetylenolpyruvoylglucosamine reductase (309 aa).

The FAD-binding PCMH-type domain maps to 25–188 (RVGGPADWLF…TSVTLQGNRE (164 aa)). Residue R168 is part of the active site. The tract at residues 202–231 (AKRDATQPTKALTAGSTFRNPAGFSSTGQA) is disordered. A compositionally biased stretch (polar residues) spans 207–231 (TQPTKALTAGSTFRNPAGFSSTGQA). S217 serves as the catalytic Proton donor. The active site involves E299.

The protein belongs to the MurB family. It depends on FAD as a cofactor.

It localises to the cytoplasm. The enzyme catalyses UDP-N-acetyl-alpha-D-muramate + NADP(+) = UDP-N-acetyl-3-O-(1-carboxyvinyl)-alpha-D-glucosamine + NADPH + H(+). It participates in cell wall biogenesis; peptidoglycan biosynthesis. In terms of biological role, cell wall formation. The sequence is that of UDP-N-acetylenolpyruvoylglucosamine reductase from Jannaschia sp. (strain CCS1).